The primary structure comprises 519 residues: Cobyric acid synthase (519 aa).

In terms of domain architecture, GATase cobBQ-type spans 256–438 (WLRVAVPRLP…WHGLFENDAF (183 aa)). The active-site Nucleophile is the Cys337. His430 is an active-site residue.

It belongs to the CobB/CobQ family. CobQ subfamily.

It functions in the pathway cofactor biosynthesis; adenosylcobalamin biosynthesis. Functionally, catalyzes amidations at positions B, D, E, and G on adenosylcobyrinic A,C-diamide. NH(2) groups are provided by glutamine, and one molecule of ATP is hydrogenolyzed for each amidation. The protein is Cobyric acid synthase of Saccharopolyspora erythraea (strain ATCC 11635 / DSM 40517 / JCM 4748 / NBRC 13426 / NCIMB 8594 / NRRL 2338).